Reading from the N-terminus, the 407-residue chain is Monooxygenase 2 (407 aa).

It belongs to the 3-hydroxybenzoate 6-hydroxylase family. As to quaternary structure, monomer. It depends on FAD as a cofactor. Expressed in seeds, seedlings, roots, leaves, flowers, pollen and siliques.

The chain is Monooxygenase 2 from Arabidopsis thaliana (Mouse-ear cress).